The primary structure comprises 132 residues: Interleukin-4 (132 aa).

Residues 1–24 form the signal peptide; the sequence is MGLTSQLIPTLVCLLALTSTFVHG. Asn28, Asn45, Asn62, and Asn101 each carry an N-linked (GlcNAc...) asparagine glycan. Cystine bridges form between Cys48/Cys84 and Cys70/Cys104.

It belongs to the IL-4/IL-13 family.

It is found in the secreted. Functionally, participates in at least several B-cell activation processes as well as of other cell types. It is a costimulator of DNA-synthesis. It induces the expression of class II MHC molecules on resting B-cells. It enhances both secretion and cell surface expression of IgE and IgG1. It also regulates the expression of the low affinity Fc receptor for IgE (CD23) on both lymphocytes and monocytes. Positively regulates IL31RA expression in macrophages. Stimulates autophagy in dendritic cells by interfering with mTORC1 signaling and through the induction of RUFY4. This chain is Interleukin-4 (IL4), found in Ailuropoda melanoleuca (Giant panda).